Consider the following 344-residue polypeptide: MSTILTNTWTRREKRIEGHAKILAIGTAIPANWVDQTTYPDFYFRITNSEHLLEHKEKFRRICNKSKIRKRHLVITEELLKKNPNLCTYNEASLNTRQDILVSEVPKLGKEAAMKAIKEWGRPISEITHLVFCTSSGVDMPGADFQLAKLLGLSSSVNRLMMYQQGCNAGAAMLRLAKDLAENNKGGRVLVVCSEVMLNVFRGPSLEQEDYLLAQCLFGDGSAAVIVGTEPRPGLETPLFELVSAAQTTIPDTDSHLKLHLREMGLTFHCSKAVPSLITQNVEDYLVKAFEPFGISDWNSIFWILHPGGIAILDRVEEKLGLEPEKLRASRDVLSESGNLTSAC.

Residue Cys-167 is part of the active site.

Belongs to the thiolase-like superfamily. Chalcone/stilbene synthases family.

The enzyme catalyses (E)-4-coumaroyl-CoA + 3 malonyl-CoA + 3 H(+) = 2',4,4',6'-tetrahydroxychalcone + 3 CO2 + 4 CoA. The protein operates within secondary metabolite biosynthesis; flavonoid biosynthesis. In terms of biological role, the primary product of this enzyme is 4,2',4',6'-tetrahydroxychalcone (also termed naringenin-chalcone or chalcone) which can under specific conditions spontaneously isomerize into naringenin. This Ipomoea nil (Japanese morning glory) protein is Chalcone synthase A (CHSA).